Reading from the N-terminus, the 343-residue chain is S-adenosylmethionine:tRNA ribosyltransferase-isomerase (343 aa).

Belongs to the QueA family. In terms of assembly, monomer.

It is found in the cytoplasm. The enzyme catalyses 7-aminomethyl-7-carbaguanosine(34) in tRNA + S-adenosyl-L-methionine = epoxyqueuosine(34) in tRNA + adenine + L-methionine + 2 H(+). Its pathway is tRNA modification; tRNA-queuosine biosynthesis. Transfers and isomerizes the ribose moiety from AdoMet to the 7-aminomethyl group of 7-deazaguanine (preQ1-tRNA) to give epoxyqueuosine (oQ-tRNA). In Stenotrophomonas maltophilia (strain R551-3), this protein is S-adenosylmethionine:tRNA ribosyltransferase-isomerase.